The primary structure comprises 244 residues: 2-C-methyl-D-erythritol 4-phosphate cytidylyltransferase (244 aa).

This sequence belongs to the IspD/TarI cytidylyltransferase family. IspD subfamily.

It catalyses the reaction 2-C-methyl-D-erythritol 4-phosphate + CTP + H(+) = 4-CDP-2-C-methyl-D-erythritol + diphosphate. Its pathway is isoprenoid biosynthesis; isopentenyl diphosphate biosynthesis via DXP pathway; isopentenyl diphosphate from 1-deoxy-D-xylulose 5-phosphate: step 2/6. Functionally, catalyzes the formation of 4-diphosphocytidyl-2-C-methyl-D-erythritol from CTP and 2-C-methyl-D-erythritol 4-phosphate (MEP). This is 2-C-methyl-D-erythritol 4-phosphate cytidylyltransferase from Prosthecochloris aestuarii (strain DSM 271 / SK 413).